Consider the following 527-residue polypeptide: CTP synthase (527 aa).

Residues Met1–Leu270 are amidoligase domain. Residue Ser12 coordinates CTP. Position 12 (Ser12) interacts with UTP. Residues Gly13 to Ile18 and Asp70 contribute to the ATP site. Mg(2+) contacts are provided by Asp70 and Glu145. CTP is bound by residues Asp152–Glu154, Lys191–Gln196, and Lys227. UTP contacts are provided by residues Lys191–Gln196 and Lys227. One can recognise a Glutamine amidotransferase type-1 domain in the interval Thr292–Lys525. Gly349 is a binding site for L-glutamine. Catalysis depends on Cys376, which acts as the Nucleophile; for glutamine hydrolysis. L-glutamine is bound by residues Leu377 to Gln380, Glu400, and Arg455. Catalysis depends on residues His498 and Glu500.

This sequence belongs to the CTP synthase family. In terms of assembly, homotetramer.

It catalyses the reaction UTP + L-glutamine + ATP + H2O = CTP + L-glutamate + ADP + phosphate + 2 H(+). The enzyme catalyses L-glutamine + H2O = L-glutamate + NH4(+). It carries out the reaction UTP + NH4(+) + ATP = CTP + ADP + phosphate + 2 H(+). Its pathway is pyrimidine metabolism; CTP biosynthesis via de novo pathway; CTP from UDP: step 2/2. With respect to regulation, allosterically activated by GTP, when glutamine is the substrate; GTP has no effect on the reaction when ammonia is the substrate. The allosteric effector GTP functions by stabilizing the protein conformation that binds the tetrahedral intermediate(s) formed during glutamine hydrolysis. Inhibited by the product CTP, via allosteric rather than competitive inhibition. In terms of biological role, catalyzes the ATP-dependent amination of UTP to CTP with either L-glutamine or ammonia as the source of nitrogen. Regulates intracellular CTP levels through interactions with the four ribonucleotide triphosphates. This chain is CTP synthase, found in Methanospirillum hungatei JF-1 (strain ATCC 27890 / DSM 864 / NBRC 100397 / JF-1).